Here is a 287-residue protein sequence, read N- to C-terminus: tRNA (guanine(9)-N1)-methyltransferase (287 aa).

Residues 1 to 27 (MSDTSDLVDGKWQRLPPVPEGMSKSQW) form a disordered region. Residues 79 to 272 (EPRVNRDQVA…SVIPSRKLDP (194 aa)) form the SAM-dependent MTase TRM10-type domain. S-adenosyl-L-methionine-binding positions include 179-180 (LT), Gly199, 203-207 (DKNRH), Cys211, Leu225, and 237-239 (KVL). The active-site Proton acceptor is the Asp203. Residues 268–278 (RKLDPVKEKEQ) show a composition bias toward basic and acidic residues. Residues 268 to 287 (RKLDPVKEKEQQQQQQQQQQ) are disordered.

This sequence belongs to the class IV-like SAM-binding methyltransferase superfamily. TRM10 family. As to quaternary structure, monomer.

The protein resides in the cytoplasm. The protein localises to the nucleus. It catalyses the reaction guanosine(9) in tRNA + S-adenosyl-L-methionine = N(1)-methylguanosine(9) in tRNA + S-adenosyl-L-homocysteine + H(+). Its function is as follows. S-adenosyl-L-methionine-dependent guanine N(1)-methyltransferase that catalyzes the formation of N(1)-methylguanine at position 9 (m1G9) in cytoplasmic tRNA. This Candida glabrata (strain ATCC 2001 / BCRC 20586 / JCM 3761 / NBRC 0622 / NRRL Y-65 / CBS 138) (Yeast) protein is tRNA (guanine(9)-N1)-methyltransferase.